Consider the following 600-residue polypeptide: Terpenoid synthase 8 (600 aa).

Mg(2+) is bound by residues D352, D356, N497, and D505. The DDXXD motif motif lies at 352 to 356 (DDTCD).

The protein belongs to the terpene synthase family. Tpsa subfamily. It depends on Mg(2+) as a cofactor. Mn(2+) is required as a cofactor. As to expression, stele, and tips of primary and secondary root.

It localises to the plastid. The catalysed reaction is (2E,6E,10E)-geranylgeranyl diphosphate = rhizathalene A + diphosphate. It functions in the pathway secondary metabolite biosynthesis; terpenoid biosynthesis. In terms of biological role, catalyzes the synthesis of the semivolatile diterpene rhizatalene A. The chain is Terpenoid synthase 8 (TPS08) from Arabidopsis thaliana (Mouse-ear cress).